The chain runs to 509 residues: Protein Jade-1 (509 aa).

Residues 1 to 45 (MKRGRLPSSSEDSDDNGSLSTTWSQNSRSQHRRSSCSRPEDRKPS) form a disordered region. Positions 60–80 (DSYQLNPDEYYVLADPWRQEW) are interaction with KAT7/HBO1 and histones. The interval 80–188 (WEKGVQVPVS…EQRCYDNMNH (109 aa)) is interaction with histones. Position 89 is a phosphoserine (Ser-89). At Thr-92 the chain carries Phosphothreonine. Lys-114 participates in a covalent cross-link: Glycyl lysine isopeptide (Lys-Gly) (interchain with G-Cter in SUMO2). The segment at 203-253 (YVVCDVCQSPDGEDGNEMVFCDKCNICVHQACYGILKVPEGSWLCRTCALG) adopts a PHD-type 1 zinc-finger fold. The segment at 255-289 (QPKCLLCPKKGGAMKPTRSGTKWVHVSCALWIPEV) adopts a C2HC pre-PHD-type zinc-finger fold. A PHD-type 2 zinc finger spans residues 313-369 (LVCSLCNEKFGASIQCSVKNCRTAFHVTCAFDRGLEMKTILAENDEVKFKSYCPKHS). Residues 373–399 (KAEEGLGEGTAQENGAPECSPRDPLEP) are disordered.

The protein belongs to the JADE family. As to quaternary structure, component of the HBO1 complex composed at least of ING4 or ING5, KAT7/HBO1, MEAF6, and one of JADE1, JADE2 and JADE3. Interacts with NPHP4.

It is found in the nucleus. Its subcellular location is the chromosome. The protein localises to the cytoplasm. The protein resides in the cytoskeleton. It localises to the cilium basal body. Its function is as follows. Scaffold subunit of some HBO1 complexes, which have a histone H4 acetyltransferase activity. Plays a key role in HBO1 complex by directing KAT7/HBO1 specificity towards histone H4 acetylation (H4K5ac, H4K8ac and H4K12ac), regulating DNA replication initiation, regulating DNA replication initiation. May also promote acetylation of nucleosomal histone H4 by KAT5. Promotes apoptosis. May act as a renal tumor suppressor. Negatively regulates canonical Wnt signaling; at least in part, cooperates with NPHP4 in this function. This is Protein Jade-1 (JADE1) from Bos taurus (Bovine).